Reading from the N-terminus, the 111-residue chain is Iron-sulfur cluster insertion protein ErpA (111 aa).

Iron-sulfur cluster-binding residues include cysteine 39, cysteine 103, and cysteine 105.

This sequence belongs to the HesB/IscA family. In terms of assembly, homodimer. Iron-sulfur cluster is required as a cofactor.

Functionally, required for insertion of 4Fe-4S clusters for at least IspG. This is Iron-sulfur cluster insertion protein ErpA from Acinetobacter baumannii (strain SDF).